A 361-amino-acid chain; its full sequence is U7 snRNA-associated Sm-like protein LSm11 (361 aa).

Residues 1–26 (MEEREWGARSARAGSPASPPSPRLDV) form a disordered region. Ser-15 and Ser-21 each carry phosphoserine. Position 41 is an omega-N-methylarginine (Arg-41). A disordered region spans residues 67 to 142 (RTGRGRARGT…QGPGRSKKAP (76 aa)). Positions 76-96 (TGEPASAGTSTGTSTGAGSSS) are enriched in low complexity. Residue Lys-121 forms a Glycyl lysine isopeptide (Lys-Gly) (interchain with G-Cter in SUMO2) linkage. Ser-155 is modified (phosphoserine). The 76-residue stretch at 155–230 (SPLGELHRCI…LTLTRLFDRL (76 aa)) folds into the Sm domain. An SM 1 region spans residues 172–205 (VHIRTFKGLRGVCTGFLVAFDKFWNMALTDVDET). The tract at residues 268–335 (RGDTDRSSHR…RKKKRKPKVD (68 aa)) is disordered. Residue Ser-281 is modified to Phosphoserine. Over residues 307 to 323 (GSSVGGTFSRATTLSRG) the composition is skewed to polar residues. Residues 344 to 357 (INQIFIRGENVLLV) form an SM 2 region.

It belongs to the snRNP Sm proteins family. As to quaternary structure, component of the heptameric ring U7 snRNP complex, or U7 Sm protein core complex, at least composed of LSM10, LSM11, SNRPB, SNRPD3, SNRPE, SNRPF, SNRPG and U7 snRNA. Formation of the U7 snRNP is an ATP-dependent process mediated by a specialized SMN complex containing at least the Sm protein core complex and additionally, the U7-specific LSM10 and LSM11 proteins. Identified in a histone pre-mRNA complex, at least composed of ERI1, LSM11, SLBP, SNRPB, SYNCRIP and YBX1. Interacts (via the Sm domains) with CLNS1A. Interacts with PRMT5, SMN, ZNF473 and WDR77. In terms of processing, not methylated.

It localises to the nucleus. Component of the U7 snRNP complex that is involved in the histone 3'-end pre-mRNA processing. Increases U7 snRNA levels but not histone 3'-end pre-mRNA processing activity, when overexpressed. Required for cell cycle progression from G1 to S phases. Binds specifically to the Sm-binding site of U7 snRNA. The chain is U7 snRNA-associated Sm-like protein LSm11 from Mus musculus (Mouse).